Here is a 511-residue protein sequence, read N- to C-terminus: Vesicular acetylcholine transporter (511 aa).

Over methionine 1–lysine 36 the chain is Cytoplasmic. Residues isoleucine 37–valine 57 form a helical membrane-spanning segment. Over proline 58–glycine 108 the chain is Lumenal, vesicle. N-linked (GlcNAc...) asparagine glycans are attached at residues asparagine 80, asparagine 83, and asparagine 88. Residues valine 109–isoleucine 129 form a helical membrane-spanning segment. Over aspartate 130–aspartate 135 the chain is Cytoplasmic. Residues isoleucine 136 to glutamate 156 traverse the membrane as a helical segment. At serine 157–arginine 165 the chain is on the lumenal, vesicle side. Residues serine 166 to lysine 186 form a helical membrane-spanning segment. The Cytoplasmic portion of the chain corresponds to tyrosine 187–leucine 197. A helical transmembrane segment spans residues glycine 198–leucine 218. Topologically, residues tyrosine 219 to tryptophan 225 are lumenal, vesicle. The chain crosses the membrane as a helical span at residues valine 226–valine 246. Residues threonine 247–methionine 267 lie on the Cytoplasmic side of the membrane. A helical transmembrane segment spans residues isoleucine 268–phenylalanine 288. Residues leucine 289 to tryptophan 306 lie on the Lumenal, vesicle side of the membrane. Asparagine 302 carries an N-linked (GlcNAc...) asparagine glycan. A helical membrane pass occupies residues glutamine 307–valine 327. Residues lysine 328–glutamine 337 lie on the Cytoplasmic side of the membrane. The chain crosses the membrane as a helical span at residues tryptophan 338–cysteine 358. At arginine 359–glutamate 363 the chain is on the lumenal, vesicle side. A helical membrane pass occupies residues leucine 364–proline 384. Residues threonine 385–serine 400 are Cytoplasmic-facing. A helical transmembrane segment spans residues valine 401–glycine 421. Over glutamine 422–glycine 428 the chain is Lumenal, vesicle. The chain crosses the membrane as a helical span at residues phenylalanine 429–phenylalanine 449. Topologically, residues leucine 450–glutamate 511 are cytoplasmic. The segment at alanine 486–glutamate 511 is disordered.

It belongs to the major facilitator superfamily. Vesicular transporter family. In terms of tissue distribution, high expression in the electric lobe of the brain.

The protein resides in the membrane. Its function is as follows. Involved in acetylcholine transport into synaptic vesicles. The sequence is that of Vesicular acetylcholine transporter from Torpedo torpedo (Common torpedo).